The following is a 300-amino-acid chain: O-methyltransferase phiE (300 aa).

Residues 130–131 and 157–158 each bind S-adenosyl-L-methionine; these read DL and DV.

Belongs to the class I-like SAM-binding methyltransferase superfamily. In terms of assembly, homodimer.

It catalyses the reaction phomoidride A + S-adenosyl-L-methionine = (-)-phomoidride B + methanol + S-adenosyl-L-homocysteine + H(+). It participates in secondary metabolite biosynthesis. Its function is as follows. O-methyltransferase; part of the gene cluster that mediates the biosynthesis of the antihypercholesterolemic agents phomoidrides which are dimeric anhydrides. Within the pathway, phiE catalyzes the acetalization reaction that converts phomoidride A to phomoidride B. The pathway begins with the highly reducing polyketide synthase phiA that catalyzes the formation of a C12-fatty acyl-ACP, starting from one acetate and 5 malonate units. The hydrolase phiM is involved in the release of the C12-fatty acyl chain from phiA. The alkylcitrate synthase (ACS) phiJ and the alkylcitrate dehydratase (ACDH) phiI then give rise to decarboxylated monomeric anhydrides by coupling the C12-fatty acyl chain with oxalacetic acid. The cyclase phiC is responsible for the dimerization of the monomeric anhydrides which leads to the production of prephomoidride that contains the characteristic bicyclo[4.3.1]deca-1,6-diene system of phomoidrides. Iterative oxidation catalyzed by the alpha-ketoglutarate-dependent dioxygenase phiK produced then phomoidride A. Finally, the methyltransferase phiE converts phomoidride A to phomoidride B via an acetalization reaction. The phosphatidylethanolamine-binding protein phiB and phiN are not essential for dimerization and their functions have still to be determined. The sequence is that of O-methyltransferase phiE from Fungal sp. (strain ATCC 74256).